A 485-amino-acid chain; its full sequence is Adenosylhomocysteinase (485 aa).

3 residues coordinate substrate: Thr-64, Asp-139, and Glu-205. 206–208 serves as a coordination point for NAD(+); sequence TTT. The substrate site is built by Lys-235 and Asp-239. Residues Asn-240, 269–274, Glu-292, Asn-327, 348–350, and Asn-397 each bind NAD(+); these read GYGDVG and IGH.

The protein belongs to the adenosylhomocysteinase family. Requires NAD(+) as cofactor.

The enzyme catalyses S-adenosyl-L-homocysteine + H2O = L-homocysteine + adenosine. Its pathway is amino-acid biosynthesis; L-homocysteine biosynthesis; L-homocysteine from S-adenosyl-L-homocysteine: step 1/1. Functionally, adenosylhomocysteine is a competitive inhibitor of S-adenosyl-L-methionine-dependent methyl transferase reactions; therefore adenosylhomocysteinase may play a key role in the control of methylations via regulation of the intracellular concentration of adenosylhomocysteine. This is Adenosylhomocysteinase (SAHH) from Phalaenopsis sp. (Moth orchid).